The primary structure comprises 298 residues: N-acetylmuramic acid 6-phosphate etherase (298 aa).

The SIS domain maps to 55–218 (IHTQVSGGGR…STGLMIKSGK (164 aa)). Catalysis depends on E83, which acts as the Proton donor. E114 is a catalytic residue.

It belongs to the GCKR-like family. MurNAc-6-P etherase subfamily. In terms of assembly, homodimer.

It carries out the reaction N-acetyl-D-muramate 6-phosphate + H2O = N-acetyl-D-glucosamine 6-phosphate + (R)-lactate. The protein operates within amino-sugar metabolism; 1,6-anhydro-N-acetylmuramate degradation. It participates in amino-sugar metabolism; N-acetylmuramate degradation. Its pathway is cell wall biogenesis; peptidoglycan recycling. Its function is as follows. Specifically catalyzes the cleavage of the D-lactyl ether substituent of MurNAc 6-phosphate, producing GlcNAc 6-phosphate and D-lactate. Together with AnmK, is also required for the utilization of anhydro-N-acetylmuramic acid (anhMurNAc) either imported from the medium or derived from its own cell wall murein, and thus plays a role in cell wall recycling. This is N-acetylmuramic acid 6-phosphate etherase from Escherichia coli O1:K1 / APEC.